Consider the following 297-residue polypeptide: Homoserine kinase (297 aa).

82–92 (PLTRGLGSSAS) lines the ATP pocket.

The protein belongs to the GHMP kinase family. Homoserine kinase subfamily.

Its subcellular location is the cytoplasm. It catalyses the reaction L-homoserine + ATP = O-phospho-L-homoserine + ADP + H(+). The protein operates within amino-acid biosynthesis; L-threonine biosynthesis; L-threonine from L-aspartate: step 4/5. Its function is as follows. Catalyzes the ATP-dependent phosphorylation of L-homoserine to L-homoserine phosphate. The sequence is that of Homoserine kinase from Bacillus cereus (strain ZK / E33L).